The sequence spans 636 residues: Chaperone protein HtpG (636 aa).

The a; substrate-binding stretch occupies residues 1–342; that stretch reads MSSETLEFQA…AHDLSLNISR (342 aa). Positions 343 to 558 are b; sequence ELLQQDRQIQ…AHDVTPTLEK (216 aa). The c stretch occupies residues 559–636; it reads MYRAMGHEVP…ILAERLARTL (78 aa).

Belongs to the heat shock protein 90 family. In terms of assembly, homodimer.

The protein resides in the cytoplasm. In terms of biological role, molecular chaperone. Has ATPase activity. This is Chaperone protein HtpG from Salinispora tropica (strain ATCC BAA-916 / DSM 44818 / JCM 13857 / NBRC 105044 / CNB-440).